We begin with the raw amino-acid sequence, 480 residues long: Bindin (480 aa).

An N-terminal signal peptide occupies residues 1 to 20 (MDSQVLPLILLIIVFAASSA). A propeptide spanning residues 21-247 (HGHFPHRTNQ…GEMRAERQRR (227 aa)) is cleaved from the precursor. The disordered stretch occupies residues 161–211 (AEMRHRRSAKDDDVNKRASPRKGSSPAGKKVQIMEQDAGKGDAHNEKEVVK). Residues 197 to 211 (DAGKGDAHNEKEVVK) show a composition bias toward basic and acidic residues. The segment at 377 to 385 (LRHLRHHSN) is fucose-binding domain. A helical membrane pass occupies residues 431–451 (GAGAVAGAAMAAGMPPYPGGA). Residues 452–480 (QGGMRVGGQPQNPMGGNAYNPMTGYRQQG) are disordered.

The protein belongs to the bindin family.

Its subcellular location is the cytoplasmic vesicle. The protein localises to the secretory vesicle. The protein resides in the acrosome membrane. Species-specific sea urchin sperm protein required for adhesion of sperm to the egg surface during fertilization. Bindin coats the acrosomal process after it is externalized by the acrosome reaction. It binds to sulfated, fucose-containing polysaccharides on the vitelline layer receptor proteoglycans which cover the egg plasma membrane. This Arbacia punctulata (Punctuate sea urchin) protein is Bindin.